Consider the following 1070-residue polypeptide: Regulator of Ty1 transposition protein 107 (1070 aa).

4 consecutive BRCT domains span residues 2–103 (STSL…QDSV), 117–213 (NPFH…LYHF), 260–352 (HPNK…FYMF), and 369–453 (PFHA…EQCY). Ser-304 bears the Phosphoserine mark. Thr-532 bears the Phosphothreonine mark. The segment at 572 to 659 (SRASFPVVDS…LQVQLGQRTK (88 aa)) is disordered. Positions 580-592 (DSKKSNLQKKDSN) are enriched in basic and acidic residues. Phosphoserine occurs at positions 591 and 593. Composition is skewed to basic and acidic residues over residues 603–615 (CEGH…KEFT) and 622–645 (DAPK…KKEE). Position 720 is a phosphoserine (Ser-720). Over residues 722 to 731 (NDDHINDEKP) the composition is skewed to basic and acidic residues. The segment at 722 to 753 (NDDHINDEKPAVNSKYTTPKTSQNITSGVDTP) is disordered. Polar residues predominate over residues 735–753 (SKYTTPKTSQNITSGVDTP). Ser-800 and Ser-806 each carry phosphoserine. BRCT domains follow at residues 829–910 (FNEL…IDLL) and 934–1049 (GINE…CVES).

As to quaternary structure, forms a complex with the cullin-RING ligase (CRL) RTT101(MMS1-MMS22). Interacts with MMS22 and RTT101. Interacts with histone H2A; requires H2A to be phosphorylated (gamma-H2A). Interacts with RAD55. In terms of processing, phosphorylated by MEC1.

The protein resides in the nucleus. In terms of biological role, required for resumption of chromosome replication after DNA damage, specifically in S phase. Is recruited to chromatin in the presence of RTT109 and RTT101 in response to stalled replication forks and acts as a scaffold during DNA repair. The polypeptide is Regulator of Ty1 transposition protein 107 (RTT107) (Saccharomyces cerevisiae (strain ATCC 204508 / S288c) (Baker's yeast)).